Here is a 274-residue protein sequence, read N- to C-terminus: Trypsin-1 (274 aa).

The first 18 residues, 1–18, serve as a signal peptide directing secretion; sequence MSNKIAILLAVLVAVVAC. Residues 19 to 47 constitute a propeptide, activation peptide; that stretch reads AEAQANQRHRLVRPSPSFSPRPRYAVGQR. In terms of domain architecture, Peptidase S1 spans 48-273; it reads IVGGFEIDVS…VRDWVRENSG (226 aa). The cysteines at positions 73 and 89 are disulfide-linked. Catalysis depends on charge relay system residues His88 and Asp133. Cystine bridges form between Cys198/Cys214 and Cys225/Cys249. The active-site Charge relay system is Ser229.

This sequence belongs to the peptidase S1 family. As to expression, constitutively expressed at low level in the gut of adult females. Also expressed in the gut of male and female pupae.

It localises to the secreted. It catalyses the reaction Preferential cleavage: Arg-|-Xaa, Lys-|-Xaa.. In terms of biological role, major function may be to aid in digestion of the blood meal. The sequence is that of Trypsin-1 (TRYP1) from Anopheles gambiae (African malaria mosquito).